Consider the following 500-residue polypeptide: Anthranilate synthase component 1 (500 aa).

Residues Ser-49 and Pro-276–Met-278 contribute to the L-tryptophan site. Chorismate is bound at residue Gly-311–Thr-312. Glu-338 lines the Mg(2+) pocket. Chorismate is bound by residues Tyr-426, Arg-446, Gly-460 to Gly-462, and Gly-462. Glu-475 contributes to the Mg(2+) binding site.

Belongs to the anthranilate synthase component I family. As to quaternary structure, heterotetramer consisting of two non-identical subunits: a beta subunit (TrpG) and a large alpha subunit (TrpE). Mg(2+) is required as a cofactor.

It carries out the reaction chorismate + L-glutamine = anthranilate + pyruvate + L-glutamate + H(+). It functions in the pathway amino-acid biosynthesis; L-tryptophan biosynthesis; L-tryptophan from chorismate: step 1/5. Feedback inhibited by tryptophan. Part of a heterotetrameric complex that catalyzes the two-step biosynthesis of anthranilate, an intermediate in the biosynthesis of L-tryptophan. In the first step, the glutamine-binding beta subunit (TrpG) of anthranilate synthase (AS) provides the glutamine amidotransferase activity which generates ammonia as a substrate that, along with chorismate, is used in the second step, catalyzed by the large alpha subunit of AS (TrpE) to produce anthranilate. In the absence of TrpG, TrpE can synthesize anthranilate directly from chorismate and high concentrations of ammonia. This is Anthranilate synthase component 1 (trpE) from Cereibacter sphaeroides (strain ATCC 17023 / DSM 158 / JCM 6121 / CCUG 31486 / LMG 2827 / NBRC 12203 / NCIMB 8253 / ATH 2.4.1.) (Rhodobacter sphaeroides).